Consider the following 416-residue polypeptide: CinA-like protein (416 aa).

This sequence belongs to the CinA family.

This Trichormus variabilis (strain ATCC 29413 / PCC 7937) (Anabaena variabilis) protein is CinA-like protein.